The chain runs to 94 residues: Aspartyl/glutamyl-tRNA(Asn/Gln) amidotransferase subunit C (94 aa).

It belongs to the GatC family. As to quaternary structure, heterotrimer of A, B and C subunits.

The catalysed reaction is L-glutamyl-tRNA(Gln) + L-glutamine + ATP + H2O = L-glutaminyl-tRNA(Gln) + L-glutamate + ADP + phosphate + H(+). It carries out the reaction L-aspartyl-tRNA(Asn) + L-glutamine + ATP + H2O = L-asparaginyl-tRNA(Asn) + L-glutamate + ADP + phosphate + 2 H(+). In terms of biological role, allows the formation of correctly charged Asn-tRNA(Asn) or Gln-tRNA(Gln) through the transamidation of misacylated Asp-tRNA(Asn) or Glu-tRNA(Gln) in organisms which lack either or both of asparaginyl-tRNA or glutaminyl-tRNA synthetases. The reaction takes place in the presence of glutamine and ATP through an activated phospho-Asp-tRNA(Asn) or phospho-Glu-tRNA(Gln). The polypeptide is Aspartyl/glutamyl-tRNA(Asn/Gln) amidotransferase subunit C (Carboxydothermus hydrogenoformans (strain ATCC BAA-161 / DSM 6008 / Z-2901)).